The following is a 144-amino-acid chain: Eukaryotic translation initiation factor 1A, Y-chromosomal (144 aa).

The span at 1–15 shows a compositional bias: basic residues; that stretch reads MPKNKGKGGKNRRRG. Residues 1-26 form a disordered region; it reads MPKNKGKGGKNRRRGKNENESEKREL. Residues 16-26 are compositionally biased toward basic and acidic residues; it reads KNENESEKREL. Positions 22-96 constitute an S1-like domain; the sequence is EKRELVFKED…NKADVILKYN (75 aa). Lys-88 is covalently cross-linked (Glycyl lysine isopeptide (Lys-Gly) (interchain with G-Cter in ubiquitin)). The segment at 114 to 144 is disordered; that stretch reads KINETDTFGPGDDDEVQFDDIGDDDEDIDDI. Residues 124–144 show a composition bias toward acidic residues; sequence GDDDEVQFDDIGDDDEDIDDI.

The protein belongs to the eIF-1A family. In terms of assembly, component of the 43S pre-initiation complex (43S PIC), which is composed of the 40S ribosomal subunit, EIF1, eIF1A (EIF1AX), eIF3 complex, EIF5 and eIF2-GTP-initiator tRNA complex (eIF2 ternary complex). Interacts with EIF5; this interaction contributes to the maintenance of EIF1 within the open 43S PIC. Interacts through its C-terminal domain (CTD) with the CTD of EIF5B; from the location of the start codon by the 43S complex until the formation of the 80S complex. Ubiquitous.

The protein resides in the cytoplasm. Component of the 43S pre-initiation complex (43S PIC), which binds to the mRNA cap-proximal region, scans mRNA 5'-untranslated region, and locates the initiation codon. This protein enhances formation of the cap-proximal complex. Together with EIF1, facilitates scanning, start codon recognition, promotion of the assembly of 48S complex at the initiation codon (43S PIC becomes 48S PIC after the start codon is reached), and dissociation of aberrant complexes. After start codon location, together with EIF5B orients the initiator methionine-tRNA in a conformation that allows 60S ribosomal subunit joining to form the 80S initiation complex. Is released after 80S initiation complex formation, just after GTP hydrolysis by EIF5B, and before release of EIF5B. Its globular part is located in the A site of the 40S ribosomal subunit. Its interaction with EIF5 during scanning contribute to the maintenance of EIF1 within the open 43S PIC. In contrast to yeast orthologs, does not bind EIF1. The polypeptide is Eukaryotic translation initiation factor 1A, Y-chromosomal (EIF1AY) (Pan troglodytes (Chimpanzee)).